Reading from the N-terminus, the 72-residue chain is Translation initiation factor IF-1 (72 aa).

Residues 1–72 (MAKDDVIEVE…TRGRIVWRGK (72 aa)) form the S1-like domain.

Belongs to the IF-1 family. As to quaternary structure, component of the 30S ribosomal translation pre-initiation complex which assembles on the 30S ribosome in the order IF-2 and IF-3, IF-1 and N-formylmethionyl-tRNA(fMet); mRNA recruitment can occur at any time during PIC assembly.

The protein localises to the cytoplasm. Its function is as follows. One of the essential components for the initiation of protein synthesis. Stabilizes the binding of IF-2 and IF-3 on the 30S subunit to which N-formylmethionyl-tRNA(fMet) subsequently binds. Helps modulate mRNA selection, yielding the 30S pre-initiation complex (PIC). Upon addition of the 50S ribosomal subunit IF-1, IF-2 and IF-3 are released leaving the mature 70S translation initiation complex. This Caldanaerobacter subterraneus subsp. tengcongensis (strain DSM 15242 / JCM 11007 / NBRC 100824 / MB4) (Thermoanaerobacter tengcongensis) protein is Translation initiation factor IF-1.